Consider the following 270-residue polypeptide: Small ribosomal subunit protein eS1 (270 aa).

The interval 235–270 (GTSKGGAASTAAVAKGEEGVKVDRPEGYEPPVLETV) is disordered. Positions 239–248 (GGAASTAAVA) are enriched in low complexity. Positions 249–261 (KGEEGVKVDRPEG) are enriched in basic and acidic residues.

Belongs to the eukaryotic ribosomal protein eS1 family. In terms of assembly, component of the small ribosomal subunit. Mature ribosomes consist of a small (40S) and a large (60S) subunit. The 40S subunit contains about 33 different proteins and 1 molecule of RNA (18S). The 60S subunit contains about 49 different proteins and 3 molecules of RNA (28S, 5.8S and 5S).

The protein localises to the cytoplasm. In Ixodes scapularis (Black-legged tick), this protein is Small ribosomal subunit protein eS1.